Reading from the N-terminus, the 170-residue chain is Shikimate kinase (170 aa).

Position 11–16 (11–16 (LSGKST)) interacts with ATP. S15 is a Mg(2+) binding site. 3 residues coordinate substrate: D33, R57, and G79. Position 119 (R119) interacts with ATP. R137 serves as a coordination point for substrate.

Belongs to the shikimate kinase family. As to quaternary structure, monomer. Mg(2+) serves as cofactor.

It localises to the cytoplasm. It carries out the reaction shikimate + ATP = 3-phosphoshikimate + ADP + H(+). It functions in the pathway metabolic intermediate biosynthesis; chorismate biosynthesis; chorismate from D-erythrose 4-phosphate and phosphoenolpyruvate: step 5/7. Its function is as follows. Catalyzes the specific phosphorylation of the 3-hydroxyl group of shikimic acid using ATP as a cosubstrate. In Clostridium botulinum (strain Loch Maree / Type A3), this protein is Shikimate kinase.